The following is a 321-amino-acid chain: 26S proteasome non-ATPase regulatory subunit 7 (321 aa).

The MPN domain occupies 9-144 (VVVHPLVLLS…TEAYISVEEV (136 aa)). A Glycyl lysine isopeptide (Lys-Gly) (interchain with G-Cter in ubiquitin) cross-link involves residue lysine 180. N6-acetyllysine is present on residues lysine 204, lysine 214, lysine 313, and lysine 314. The tract at residues 281-321 (ANRDAEKKEGQEKEESKKERKDDKEKEKSDAAKKEEKKEKK) is disordered.

Belongs to the peptidase M67A family. In terms of assembly, component of the 19S proteasome regulatory particle complex. The 26S proteasome consists of a 20S core particle (CP) and two 19S regulatory subunits (RP). The regulatory particle is made of a lid composed of 9 subunits including PSMD7, a base containing 6 ATPases and few additional components. Within the complex, PSMD7 interacts with subunit PSMD4 through their respective MPN domain. Interacts with TRIM5.

Its function is as follows. Component of the 26S proteasome, a multiprotein complex involved in the ATP-dependent degradation of ubiquitinated proteins. This complex plays a key role in the maintenance of protein homeostasis by removing misfolded or damaged proteins, which could impair cellular functions, and by removing proteins whose functions are no longer required. Therefore, the proteasome participates in numerous cellular processes, including cell cycle progression, apoptosis, or DNA damage repair. The polypeptide is 26S proteasome non-ATPase regulatory subunit 7 (Psmd7) (Mus musculus (Mouse)).